We begin with the raw amino-acid sequence, 433 residues long: Oxidoreductase acuF (433 aa).

The protein operates within secondary metabolite biosynthesis. In terms of biological role, oxidoreductase; part of the gene cluster that mediates the biosynthesis of aculins. The pathway begins with the synthesis of 6-methylsalicylic acid by the polyketide synthase (PKS) acuA via condensation of acetate and malonate units. The 6-methylsalicylic acid decarboxylase acuB then catalyzes the decarboxylation of 6-methylsalicylic acid to yield m-cresol (also known as 3-methylphenol). These first reactions occur in the cytosol. The intermediate m-cresol is then transported into the endoplasmic reticulum where the cytochrome P450 monooxygenase acuC converts it to m-hydroxybenzyl alcohol, which is further converted to gentisyl alcohol by the cytochrome P450 monooxygenase acuD. Gentisyl alcohol is further oxidized by the oxidoreductase acuE that probably catalyzes hydroxylation of the aromatic ring. The aromatic system might then be opened by oxidation through a Baeyer-Villiger type of oxidation, which could be catalyzed by acuF, with the carboxylic acid at C-1 subsequently reduced to an aldehyde by acuG. Subsequently, a hemiacetal is formed, before the dehydrogenase acuH would reduce the double bond between C-4 and C-6. Finally, keto-enol tautomerism results in formation of aculinic acid, which exists as two diastereomers (both R/S configurations at C-1) by non-enzymatic hemiacetal formation. The carboxypeptidase acuI could be involved in the linking of aculinic acid to an aculene A moiety produced by the aculene biosynthesis cluster and which leads to the production of aculin A. AcuI may also be involved in the attachment of proline to aculinic acid to form epi-aculins A and B. The polypeptide is Oxidoreductase acuF (Aspergillus aculeatus (strain ATCC 16872 / CBS 172.66 / WB 5094)).